Consider the following 84-residue polypeptide: Large ribosomal subunit protein bL27 (84 aa).

This sequence belongs to the bacterial ribosomal protein bL27 family.

The protein is Large ribosomal subunit protein bL27 of Campylobacter lari (strain RM2100 / D67 / ATCC BAA-1060).